The following is a 28-amino-acid chain: VGCEEDPMHCKGKQAKPTCCNGVCNCNV.

It belongs to the short scorpion toxin superfamily. Potassium channel inhibitor family. Alpha-KTx 09 subfamily. As to expression, expressed by the venom gland.

Its subcellular location is the secreted. Functionally, blocks potassium channels. The sequence is that of Peptide 2 from Hottentotta tamulus sindicus (Scorpion).